We begin with the raw amino-acid sequence, 321 residues long: Transmembrane protein fend (321 aa).

Positions 1–18 are cleaved as a signal peptide; that stretch reads MFHSLVLMACALAALSVA. Over 19–261 the chain is Extracellular; it reads QGAGSARSKS…ALPTPSELGG (243 aa). The chain crosses the membrane as a helical span at residues 262-282; it reads VVYPAFGALAFFLALLVMFLF. At 283–321 the chain is on the cytoplasmic side; the sequence is LRPQRKRFPLDADSADTATLIGRSSSSSRNSMDASTLHV.

The protein localises to the membrane. Its function is as follows. Involved in the normal targeting of ventral muscle, muscle 12, by motoneurons. May function as an axon guidance molecule involved in neuromuscular specificity. This Drosophila melanogaster (Fruit fly) protein is Transmembrane protein fend (fend).